Here is a 579-residue protein sequence, read N- to C-terminus: MENLEQLQERVAVSDGRAKADLVIKNGRIINVFSGEIMDGDIAIKNGYIAGIGNFPDAEKIIDAAGAFIAPGFIDAHVHVESAMVTPAEFARVLLPNGVTTIVTDPHEIANVAGEKGIEFMLEDAKGVPIDMFVMLPSSVPATEGEHNGETLHAEKLHPLYRHEKVIGLAEVMDFPSVAKGSSDILTKIIDAKKEGGRIDGHGAGLTSADLNNYLAVGIRTDHESTTAKEATDRLRAGMFVMLREGTVGRDLLQTIPAVSEKNSHRFCFCTDDKLINDLITEGSINYNIRLAIKNGIDPITAIQMATINAANCHNLPYLGAVAAGYQADIVFLTDIETVEISKVLKNGEVVVDNGVRHEAAFKQQAAVPFVSPPINHHVSLQDLALPLTKETCYVIGMQPNSLFTEKRIEQVAIQDGKFVPTVENDLLKMAVVERHHDTGCVGLGIVKGFGLTEGAIATTVAHDSHNIVAVGISDEAMKAAIDHITQTGGGIAVVNGAGQVLHDLALPIAGLLSDKSYEEVENDLAGLLNAFKQISTADGFDPFLTLSFLTLPVIPELKLTDQGLFDFATFQIISNEVN.

This sequence belongs to the metallo-dependent hydrolases superfamily. Adenine deaminase family. Mn(2+) is required as a cofactor.

It catalyses the reaction adenine + H2O + H(+) = hypoxanthine + NH4(+). The chain is Adenine deaminase from Listeria monocytogenes serotype 4b (strain F2365).